Reading from the N-terminus, the 291-residue chain is MLKDIFSKKKKKYASVPAESAKQDVPEGIMTKCPDCKKIMLTKELDKNLRVCMNCGYHLQMNAKQRIKSLLDDGSFEEFNQDMMSENPLEFPGYLEKLQKDREKTSLNEAVVTGKGTIDGSPAVVAVMDSSFRMGSMGSVVGEKITLAIEKAREEKVPFIIFTASGGARMQEGLLSLMQMAKTSSALKLFSEEQGLIISVMTHPTTGGVSASFASLGDYNLAEPGALIGFAGRRIIEQTIREELPEDFQTAEFLLKHGQLDSVVHRADMKKTLGSILKMHQTGGDLEWLEN.

Positions 29–291 constitute a CoA carboxyltransferase N-terminal domain; it reads IMTKCPDCKK…TGGDLEWLEN (263 aa). Cys-33, Cys-36, Cys-52, and Cys-55 together coordinate Zn(2+). A C4-type zinc finger spans residues 33-55; it reads CPDCKKIMLTKELDKNLRVCMNC.

Belongs to the AccD/PCCB family. In terms of assembly, acetyl-CoA carboxylase is a heterohexamer composed of biotin carboxyl carrier protein (AccB), biotin carboxylase (AccC) and two subunits each of ACCase subunit alpha (AccA) and ACCase subunit beta (AccD). Requires Zn(2+) as cofactor.

The protein resides in the cytoplasm. It catalyses the reaction N(6)-carboxybiotinyl-L-lysyl-[protein] + acetyl-CoA = N(6)-biotinyl-L-lysyl-[protein] + malonyl-CoA. It participates in lipid metabolism; malonyl-CoA biosynthesis; malonyl-CoA from acetyl-CoA: step 1/1. Component of the acetyl coenzyme A carboxylase (ACC) complex. Biotin carboxylase (BC) catalyzes the carboxylation of biotin on its carrier protein (BCCP) and then the CO(2) group is transferred by the transcarboxylase to acetyl-CoA to form malonyl-CoA. The polypeptide is Acetyl-coenzyme A carboxylase carboxyl transferase subunit beta (Bacillus licheniformis (strain ATCC 14580 / DSM 13 / JCM 2505 / CCUG 7422 / NBRC 12200 / NCIMB 9375 / NCTC 10341 / NRRL NRS-1264 / Gibson 46)).